We begin with the raw amino-acid sequence, 309 residues long: Taste receptor type 2 member 114 (309 aa).

The Extracellular portion of the chain corresponds to 1–7 (MLGAMEG). The chain crosses the membrane as a helical span at residues 8-28 (VLLSVATSEALLGIVGNTFIA). Over 29–43 (LVNCMDCTRNKNLYN) the chain is Cytoplasmic. The chain crosses the membrane as a helical span at residues 44–64 (IGFILTGLAISRICLVWILIT). The Extracellular segment spans residues 65 to 87 (EAYIKIFSPQLLSPINIIELISY). A helical membrane pass occupies residues 88–108 (LWIITSQLNVWFATSLSIFYF). Over 109 to 127 (LKIANFSHHIFLWLKRRIN) the chain is Cytoplasmic. The helical transmembrane segment at 128–148 (IVFAFLIGCLLMSWLFSFPVV) threads the bilayer. Residues 149-182 (VKMVKDKKMLYINSSWQIHMKKSELIINYVFTNG) lie on the Extracellular side of the membrane. Asn161 carries N-linked (GlcNAc...) asparagine glycosylation. Residues 183–203 (GVFLLFIIMLIVCFLLIISLW) form a helical membrane-spanning segment. The Cytoplasmic segment spans residues 204–233 (RHSKWMQSNESGFRDLNTEVHVKTIKVLLS). Residues 234–254 (FIILFILHLIGITINVICLLV) form a helical membrane-spanning segment. The Extracellular segment spans residues 255-259 (PENNL). A helical membrane pass occupies residues 260–280 (LFVFGLTIAFLYPCCHSLILI). Topologically, residues 281-309 (LANSRLKRCFVRILQQLMCSEEGKEFRNT) are cytoplasmic.

It belongs to the G-protein coupled receptor T2R family.

The protein resides in the membrane. Its function is as follows. Putative taste receptor which may play a role in the perception of bitterness. This Rattus norvegicus (Rat) protein is Taste receptor type 2 member 114.